The primary structure comprises 429 residues: MQIYSKSEKAFKEAKKVLPGGVNSPVRAFNSVDASPVFMDHGKGAYITDIDGNEYIDYVLSWGPLILGHANPSVVQAITNAAMKGTSFGTPTEIETELAKLVIERVPSIEIVRMVSSGTEATMSAIRLARGYTKREKILKFEGSYHGHGDSLLIKAGSGVATLGLPDSPGVTKGLAADTITVPYNDIEGAKLAFEKYGEEIAAVIVEPVAGNMGVVPPIEGFLEGLRELTTNYGSLLIFDEVMTGFRVDYYSAQGYYVVTPDLTCLGKVIGGGLPVGAYGGKKEIMEQIAPAGSIYQAGTLSGNPLAMNAGFETVRQLTPQDYDVFRTLIKRMEEGLTEISARRQVPLSINKAGSMFGFFFTDQKVTNFDTAKTSDLEFFRSYYREMLGQGIFLPPSQFEGVFISTMHTEKEIDKTLDAFDTTCKILRG.

The residue at position 268 (lysine 268) is an N6-(pyridoxal phosphate)lysine.

The protein belongs to the class-III pyridoxal-phosphate-dependent aminotransferase family. HemL subfamily. In terms of assembly, homodimer. It depends on pyridoxal 5'-phosphate as a cofactor.

Its subcellular location is the cytoplasm. The enzyme catalyses (S)-4-amino-5-oxopentanoate = 5-aminolevulinate. It functions in the pathway porphyrin-containing compound metabolism; protoporphyrin-IX biosynthesis; 5-aminolevulinate from L-glutamyl-tRNA(Glu): step 2/2. The protein is Glutamate-1-semialdehyde 2,1-aminomutase 2 of Listeria monocytogenes serotype 4a (strain HCC23).